The sequence spans 933 residues: Phosphoenolpyruvate carboxylase (933 aa).

Residues histidine 164 and lysine 595 contribute to the active site.

Belongs to the PEPCase type 1 family. The cofactor is Mg(2+).

It catalyses the reaction oxaloacetate + phosphate = phosphoenolpyruvate + hydrogencarbonate. In terms of biological role, forms oxaloacetate, a four-carbon dicarboxylic acid source for the tricarboxylic acid cycle. This Rhodopseudomonas palustris (strain BisB5) protein is Phosphoenolpyruvate carboxylase.